The sequence spans 193 residues: Superoxide dismutase [Fe] (193 aa).

Fe cation is bound by residues His-27, His-74, Asp-157, and His-161.

This sequence belongs to the iron/manganese superoxide dismutase family. Homodimer. Requires Fe cation as cofactor.

It carries out the reaction 2 superoxide + 2 H(+) = H2O2 + O2. Its function is as follows. Destroys superoxide anion radicals which are normally produced within the cells and which are toxic to biological systems. The sequence is that of Superoxide dismutase [Fe] (sodB) from Salmonella typhimurium (strain LT2 / SGSC1412 / ATCC 700720).